The sequence spans 138 residues: Cellular retinoic acid-binding protein 2 (138 aa).

The Nuclear localization signal motif lies at 21-31 (KVLGVNVMLRK). K102 is covalently cross-linked (Glycyl lysine isopeptide (Lys-Gly) (interchain with G-Cter in SUMO)). An all-trans-retinoate-binding site is contributed by 133-135 (RVY).

It belongs to the calycin superfamily. Fatty-acid binding protein (FABP) family. As to quaternary structure, interacts with RXR and RARA. Interacts with importin alpha. Post-translationally, sumoylated in response to retinoic acid binding, sumoylation is critical for dissociation from ER and subsequent nuclear translocation.

It is found in the cytoplasm. The protein localises to the endoplasmic reticulum. The protein resides in the nucleus. Functionally, transports retinoic acid to the nucleus. Regulates the access of retinoic acid to the nuclear retinoic acid receptors. In Homo sapiens (Human), this protein is Cellular retinoic acid-binding protein 2 (CRABP2).